A 308-amino-acid chain; its full sequence is Aspartate carbamoyltransferase catalytic subunit (308 aa).

Carbamoyl phosphate-binding residues include R58 and T59. K86 is a binding site for L-aspartate. Residues R108, H136, and Q139 each contribute to the carbamoyl phosphate site. Positions 169 and 222 each coordinate L-aspartate. Residues G264 and P265 each coordinate carbamoyl phosphate.

It belongs to the aspartate/ornithine carbamoyltransferase superfamily. ATCase family. As to quaternary structure, heterododecamer (2C3:3R2) of six catalytic PyrB chains organized as two trimers (C3), and six regulatory PyrI chains organized as three dimers (R2).

The enzyme catalyses carbamoyl phosphate + L-aspartate = N-carbamoyl-L-aspartate + phosphate + H(+). It participates in pyrimidine metabolism; UMP biosynthesis via de novo pathway; (S)-dihydroorotate from bicarbonate: step 2/3. In terms of biological role, catalyzes the condensation of carbamoyl phosphate and aspartate to form carbamoyl aspartate and inorganic phosphate, the committed step in the de novo pyrimidine nucleotide biosynthesis pathway. The sequence is that of Aspartate carbamoyltransferase catalytic subunit from Campylobacter hominis (strain ATCC BAA-381 / DSM 21671 / CCUG 45161 / LMG 19568 / NCTC 13146 / CH001A).